We begin with the raw amino-acid sequence, 653 residues long: tRNA uridine 5-carboxymethylaminomethyl modification enzyme MnmG (653 aa).

FAD is bound by residues 18-23, valine 130, and threonine 195; that span reads GAGHAG. 287–301 is an NAD(+) binding site; it reads GPRYCPSIEDKVVRF. FAD is bound at residue glutamine 384. The segment at 624–653 is disordered; it reads SQTKSSASVDKRASSDNESSRPTSSASDSL. Positions 632–642 are enriched in basic and acidic residues; that stretch reads VDKRASSDNES. Residues 643–653 are compositionally biased toward polar residues; it reads SRPTSSASDSL.

Belongs to the MnmG family. As to quaternary structure, homodimer. Heterotetramer of two MnmE and two MnmG subunits. FAD serves as cofactor.

The protein localises to the cytoplasm. In terms of biological role, NAD-binding protein involved in the addition of a carboxymethylaminomethyl (cmnm) group at the wobble position (U34) of certain tRNAs, forming tRNA-cmnm(5)s(2)U34. This chain is tRNA uridine 5-carboxymethylaminomethyl modification enzyme MnmG, found in Rhodopirellula baltica (strain DSM 10527 / NCIMB 13988 / SH1).